Here is a 328-residue protein sequence, read N- to C-terminus: MIGILVSIAVTAIIFKYTESELTWSVIKRANWLLLIVAFLLQVSFWLLWALRMKLLSNYLGYRISFFHSLEITMASMFTASITPSSAGGEPVRVKMLSDRGVEVGTSAFIVLAERILDSMYFSTALPVFLIVTGFSTSFGFKIAIIFITLLLVFLYILYRIFRNESSIDKFAQLLYKAVRKFNEKKAEKYSSTFSRELRRFREATIKMLSDSPSGILVLYLVTLVMWSASFAIPSVILVALGYDAYFLYSYTAQLIIVIVSLVPLTPGSSGIAEVSMAYLYSNFVPTNVLGVLVGLWRLITYHTNIFFGAISVNYSLIKSKFVKNQLT.

6 helical membrane passes run 31 to 51, 116 to 136, 139 to 159, 221 to 241, 245 to 265, and 277 to 297; these read NWLL…LWAL, ILDS…TGFS, FGFK…YILY, LVTL…LVAL, AYFL…LVPL, and MAYL…VGLW.

This sequence belongs to the UPF0104 family.

It localises to the cell membrane. This is UPF0104 membrane protein AF_2231 from Archaeoglobus fulgidus (strain ATCC 49558 / DSM 4304 / JCM 9628 / NBRC 100126 / VC-16).